A 623-amino-acid chain; its full sequence is uncharacterized protein (623 aa).

5 consecutive transmembrane segments (helical) span residues 242 to 262 (IVLA…ITWL), 288 to 308 (IVSP…LDIF), 318 to 338 (VSMW…IALF), 361 to 381 (VINL…LLGV), and 387 to 407 (FNVS…ALAV).

The protein belongs to the MscS (TC 1.A.23) family.

The protein localises to the cell membrane. This is an uncharacterized protein from Helicobacter pylori (strain ATCC 700392 / 26695) (Campylobacter pylori).